We begin with the raw amino-acid sequence, 93 residues long: uncharacterized protein (93 aa).

The tract at residues 26 to 73 (NRGTIFRPMTRNSGIVGRRGGPVAPAPFRNNVQKPGTRPPGFKPPSGV) is disordered.

This is an uncharacterized protein from Caenorhabditis elegans.